The sequence spans 321 residues: Lipoyl synthase (321 aa).

The [4Fe-4S] cluster site is built by Cys68, Cys73, Cys79, Cys94, Cys98, Cys101, and Ser308. The Radical SAM core domain maps to 80–297 (FNHGTATFMI…KDYAEEIGFT (218 aa)).

It belongs to the radical SAM superfamily. Lipoyl synthase family. It depends on [4Fe-4S] cluster as a cofactor.

It is found in the cytoplasm. The catalysed reaction is [[Fe-S] cluster scaffold protein carrying a second [4Fe-4S](2+) cluster] + N(6)-octanoyl-L-lysyl-[protein] + 2 oxidized [2Fe-2S]-[ferredoxin] + 2 S-adenosyl-L-methionine + 4 H(+) = [[Fe-S] cluster scaffold protein] + N(6)-[(R)-dihydrolipoyl]-L-lysyl-[protein] + 4 Fe(3+) + 2 hydrogen sulfide + 2 5'-deoxyadenosine + 2 L-methionine + 2 reduced [2Fe-2S]-[ferredoxin]. It participates in protein modification; protein lipoylation via endogenous pathway; protein N(6)-(lipoyl)lysine from octanoyl-[acyl-carrier-protein]: step 2/2. Its function is as follows. Catalyzes the radical-mediated insertion of two sulfur atoms into the C-6 and C-8 positions of the octanoyl moiety bound to the lipoyl domains of lipoate-dependent enzymes, thereby converting the octanoylated domains into lipoylated derivatives. The sequence is that of Lipoyl synthase from Shewanella loihica (strain ATCC BAA-1088 / PV-4).